Here is a 223-residue protein sequence, read N- to C-terminus: Pre-hexon-linking protein VIII (223 aa).

Threonine 64 is subject to Phosphothreonine; by host. Positions 112–153 (GALAPRDLYALTLRGRGIQLNEDLPLSASTLRPDGIFQLGGG) are excised as a propeptide. Residue serine 170 is modified to Phosphoserine; by host.

It belongs to the adenoviridae hexon-linking protein family. In terms of assembly, interacts with the peripentonal hexons as well as the hexons in the facets. Part of a complex composed of the core-capsid bridging protein, the endosome lysis protein VI and the hexon-linking protein VIII; these interactions bridge the virus core to the capsid. In terms of processing, cleaved by the viral protease during virion maturation. May cause the middle segment to be shed from the capsid.

The protein localises to the virion. The protein resides in the host nucleus. In terms of biological role, structural component of the virion that acts as a cement protein on the capsid interior and which glue the peripentonal hexons and group-of-nine hexons together. This chain is Pre-hexon-linking protein VIII, found in Porcine adenovirus A serotype 3 (PAdV-3).